We begin with the raw amino-acid sequence, 294 residues long: MYB-like transcription factor ODO1 (294 aa).

HTH myb-type domains follow at residues 9 to 61 and 62 to 116; these read KLGV…TNYL and RPDL…KKKL. 2 consecutive DNA-binding regions (H-T-H motif) follow at residues 37 to 61 and 89 to 112; these read WRAV…TNYL and WSKI…NTHI. 2 disordered regions span residues 128 to 152 and 171 to 191; these read PLKK…NGHQ and TEFD…NSSC.

In terms of tissue distribution, restricted to the petals, with the highest expression in the limb, probably in both epidermal and mesophyll cell layers.

It is found in the nucleus. In terms of biological role, R2R3 MYB-type transcription factor controlling the production of volatile organic compounds (VOCs), including floral volatile benzenoids and phenylpropanoids (FVBP), in flowers of fragrant cultivars (e.g. cv. Mitchell and cv. V26) by regulating the shikimate pathway, via the activation of several genes (e.g. EPSPS, ADT1, PAL1, CFAT and CCoAOMT1). This scent, mostly produced in the evening and night by the petals, attracts the pollinators (e.g. the night-active hawkmoth pollinator Manduca sexta). Promotes the expression of ABCG1 in petals three hours before the onset of volatile scent emission. Anthocyanins production is not controlled by ODO1 as color and scent are produced at different stages of development. Seems to trigger a negative feed-back loop that represses the expression of EOBI. This is MYB-like transcription factor ODO1 from Petunia hybrida (Petunia).